The chain runs to 72 residues: Multiple antibiotic resistance protein MarB (72 aa).

The sequence is that of Multiple antibiotic resistance protein MarB (marB) from Escherichia coli (strain K12).